A 591-amino-acid chain; its full sequence is Paralemmin-3 (591 aa).

4 consecutive repeats follow at residues E171 to K174, E183 to Q186, E224 to Q227, and K234 to D237. Residues D282–E293 show a composition bias toward polar residues. Disordered regions lie at residues D282 to Q317, K332 to D413, and P515 to M591. 2 stretches are compositionally biased toward basic and acidic residues: residues S306–Q317 and E349–P383. 2 stretches are compositionally biased toward polar residues: residues Q385–D413 and Q528–Q542. Positions S543 to S554 are enriched in low complexity. Polar residues predominate over residues Q559–Q575. The short motif at R579–K583 is the Nuclear localization signal element. 2 S-palmitoyl cysteine lipidation sites follow: C585 and C587. A Cysteine methyl ester modification is found at C588. C588 carries S-farnesyl cysteine lipidation. Positions V589–M591 are cleaved as a propeptide — removed in mature form.

Belongs to the paralemmin family. In terms of processing, may be phosphorylated during oocyte maturation. Post-translationally, palmitoylated on Cys-585 and Cys-587 and prenylated on Cys-588; which is required for membrane association. In terms of tissue distribution, in Xenopus oocyte, in the central nervous system cells of tadpoles and adult frogs, and transiently in epithelial cells of stomach and gut of tadpoles. Highly expressed in kidney.

Its subcellular location is the cytoplasm. It localises to the nucleus. It is found in the cell membrane. In terms of biological role, maternal ATP-binding protein that may have multiple functions during development, one of which may be associated with the development and maintenance of the central nervous system. This is Paralemmin-3 (palm3) from Xenopus laevis (African clawed frog).